We begin with the raw amino-acid sequence, 250 residues long: MSVKKQLEKLSILGATYHKNGWMPGTAGNLSVRILGESGFWVSGSGLDKNTLNKRNFLYVDLKSGRLSPSKNTKVEKGLKPSAETSIHRAVYCALDDIGCGLHVHTLESNLIRTNTSQHRPVALLELPAIEILKVYGIWKESPKVYVPVIYNFPNVQDISDCLESYLKEYKPVVPFCIIEKHGITVWGKDTVQANRNLEATDFILKYMISSRNLSNPEGKKNFPTENNTSESDRQKVYVAEFPVYPATFL.

Positions 103 and 105 each coordinate Zn(2+).

The protein belongs to the aldolase class II family. MtnB subfamily. Zn(2+) is required as a cofactor.

The catalysed reaction is 5-(methylsulfanyl)-D-ribulose 1-phosphate = 5-methylsulfanyl-2,3-dioxopentyl phosphate + H2O. The protein operates within amino-acid biosynthesis; L-methionine biosynthesis via salvage pathway; L-methionine from S-methyl-5-thio-alpha-D-ribose 1-phosphate: step 2/6. Catalyzes the dehydration of methylthioribulose-1-phosphate (MTRu-1-P) into 2,3-diketo-5-methylthiopentyl-1-phosphate (DK-MTP-1-P). The protein is Methylthioribulose-1-phosphate dehydratase of Leptospira borgpetersenii serovar Hardjo-bovis (strain JB197).